The following is a 397-amino-acid chain: Chorismate synthase (397 aa).

2 residues coordinate NADP(+): Arg-40 and Arg-46. FMN-binding positions include 129 to 131, 257 to 258, Gly-302, 317 to 321, and Arg-343; these read RSS, QA, and KPISS.

This sequence belongs to the chorismate synthase family. In terms of assembly, homotetramer. FMNH2 serves as cofactor.

It catalyses the reaction 5-O-(1-carboxyvinyl)-3-phosphoshikimate = chorismate + phosphate. The protein operates within metabolic intermediate biosynthesis; chorismate biosynthesis; chorismate from D-erythrose 4-phosphate and phosphoenolpyruvate: step 7/7. In terms of biological role, catalyzes the anti-1,4-elimination of the C-3 phosphate and the C-6 proR hydrogen from 5-enolpyruvylshikimate-3-phosphate (EPSP) to yield chorismate, which is the branch point compound that serves as the starting substrate for the three terminal pathways of aromatic amino acid biosynthesis. This reaction introduces a second double bond into the aromatic ring system. In Chlorobaculum tepidum (strain ATCC 49652 / DSM 12025 / NBRC 103806 / TLS) (Chlorobium tepidum), this protein is Chorismate synthase.